The following is a 227-amino-acid chain: Max dimerization protein 1 (227 aa).

A Nuclear localization signal motif is present at residues 21–48 (RREREAEHGYASMLPYSKDRDAFKRRNK). 3 disordered regions span residues 30–66 (YASM…MEKN), 142–161 (MDSV…REEL), and 184–227 (GWSS…GLGL). In terms of domain architecture, bHLH spans 55–107 (SSRSTHNEMEKNRRAHLRLCLEKLKGLVPLGPESSRHTTLSLLTKAKLHIKKL). The segment covering 198–211 (MQSLGSDEGYSSAT) has biased composition (polar residues). Basic and acidic residues predominate over residues 216-227 (KLQDGHKAGLGL).

In terms of assembly, heterodimer with MAX; the interaction is required for DNA-binding. DNA binding requires dimerization with another bHLH protein; does not form homodimers, and does not bind to DNA in the absence of MAX in vitro. Interacts with RNF17. In terms of processing, ubiquitinated by BIRC2/c-IAP1, leading to its subsequent degradation by the proteasome.

It localises to the nucleus. Component of a transcriptional repressor complex together with MAX. In complex with MAX binds to the core DNA sequence 5'-CAC[GA]TG-3'. Antagonizes MYC transcriptional activity by competing with MYC for MAX binding. Binds to the TERT promoter and represses telomerase expression, possibly by interfering with MYC binding. The protein is Max dimerization protein 1 (Mxd1) of Mus musculus (Mouse).